The sequence spans 503 residues: MKWLKRLTVIVGTFYRYRLAGLCASLMGSGWICALLKMMPQSSKLKNEPPAVRLRLALESLGPIFIKFGQVLSTRPDLIPHDYAVELAKLQDKVPPFDARLSREQIEKSLGQSIEKLYAEFETEPIASASIAQVHKARLHSGERVAVKVLRPNLLPLIEQDLSLMRFGAAWVERLFSDGRRLKPLEVVAEFDKYLHDELDLMREAANAGQLGRNFHNSNMLIVPKVFYDYCTSDVLTIEWMDGTPVADIAKLKADGIDLHKLADYGVEIFFTQVFRDGFFHADMHPGNILVAADNRYIALDFGIVGTLTDYDKRYLAINFLAFFNRDYRRVATAHIESGWVPADTRAEELEAAVRAVCEPVFNKPISQISFGLVLMRLFEVSRRFNVEIQPQLVLLQKTLLNIEGLGRQLDPDLDLWKTAKPFLVKWMNGQVGPKALWRNLKNEAPDWAQIIPSLPRKISALIDENRQQEMRDAYIHLVKVQQRQSLWLAVIAVVLLLILLLK.

Residues 13–35 (TFYRYRLAGLCASLMGSGWICAL) traverse the membrane as a helical segment. A Protein kinase domain is found at 120-491 (EFETEPIASA…QQRQSLWLAV (372 aa)). Residues 126–134 (IASASIAQV) and lysine 148 contribute to the ATP site. Aspartate 283 serves as the catalytic Proton acceptor. Residues 485–502 (QSLWLAVIAVVLLLILLL) form a helical membrane-spanning segment.

Belongs to the ABC1 family. UbiB subfamily.

The protein resides in the cell inner membrane. It participates in cofactor biosynthesis; ubiquinone biosynthesis [regulation]. Its function is as follows. Is probably a protein kinase regulator of UbiI activity which is involved in aerobic coenzyme Q (ubiquinone) biosynthesis. This is Probable protein kinase UbiB from Neisseria meningitidis serogroup A / serotype 4A (strain DSM 15465 / Z2491).